We begin with the raw amino-acid sequence, 816 residues long: S-layer protein (816 aa).

A signal peptide spans 1 to 29 (MAKTNSYKKVIAGTMTAAMVAGVVSPVAA). SLH domains lie at 30–93 (AGKS…DAKP), 94–150 (SFAD…KVNG), and 152–215 (PATK…VAKV). Positions 403–480 (FTSKDFKQND…TVKDSKGKEL (78 aa)) constitute a BIG2 domain.

The protein resides in the secreted. Its subcellular location is the cell wall. The protein localises to the S-layer. The S-layer is a paracrystalline mono-layered assembly of proteins which coat the surface of bacteria. This Bacillus thuringiensis subsp. finitimus protein is S-layer protein.